A 796-amino-acid polypeptide reads, in one-letter code: MNQTASVSHHIKCQPSKTIKELGSNSPPQRNWKGIAIALLVILVVCSLITMSVILLTPDELTNSSETRLSLEELLGKGFGLHNPEARWINDTDVVYKTDNGHVMKLNAETNATTLLLDNSTFVTFKASRHSLSPDLKYVLLAYDVKQIFHYSFTASYLIYNIHTGEVWELNPPEVEDSVLQYAAWGVQGQQLIYIFENNIYYQPDIKSSSLRLTSSGKEGIVFNGIADWLYEEELLHSHIAHWWSPDGERLAFLMINDSLVPNMVIPRFTGALYPKAKQYPYPKAGQANPSVKLYVVNLYGPTHTLELMPPDIFKSREYYITMVKWVSNTRTVVRWLNRPQNISILTVCESTTGACSRKYEMTSDTWISKQNEEPVFSRDGSKFFMTVPVKQGGRGEFHHIAMFLVQSKSEQITVRHLTSGNWEVIRILAYDETTQKIYFLSTEFSPRGRQLYSASTEGLLSRDCISCNFRKEDCTYFDASFSPMNQHFLLFCEGPKVPMVSLHSTDNPSNYYILERNSMMKETIQKKKLAKREIRILHIDDYELPLQLSFPKDFLEKNQYALLLIIDEEPGGQMVTEKFHVDWDSVLIDTDNVIVARFDGRGSGFQGLKVLQEIHRRTGSVEAKDQIAAIKYLLKQPYIDSKRLSIFGKGYGGYIASMILKSDEKFFKCGTVVAPISDMKLYASAFSERYLGMPSKEESTYQASSVLHNIHGLKEENLLIIHGTADTKVHFQHSAELIKHLIKAGVNYTLQVYPDEGYHISDKSKHHFYSTILRFFSDCLKEEVSVLPQEPEEDE.

Residues 1–34 (MNQTASVSHHIKCQPSKTIKELGSNSPPQRNWKG) are Cytoplasmic-facing. Residues 1–55 (MNQTASVSHHIKCQPSKTIKELGSNSPPQRNWKGIAIALLVILVVCSLITMSVIL) form a mediates effects on KCND2 region. Residues 35-55 (IAIALLVILVVCSLITMSVIL) form a helical; Signal-anchor for type II membrane protein membrane-spanning segment. Residues 56-796 (LTPDELTNSS…VLPQEPEEDE (741 aa)) are Extracellular-facing. Residues N63, N90, N111, and N119 are each glycosylated (N-linked (GlcNAc...) asparagine). Residues Y138 and Y143 each carry the phosphotyrosine modification. Residues N257, N342, and N748 are each glycosylated (N-linked (GlcNAc...) asparagine).

The protein belongs to the peptidase S9B family. DPPIV subfamily. As to quaternary structure, may form oligomers. Interacts with KCND1. Interacts with KCND2. Identified in a complex with KCND2 and KCNIP3. Post-translationally, N-glycosylation is important for cell surface expression, specially at Asn-257, which is crucial. Detected in brain cortex, hippocampus, thalamus and cerebellum Purkinje cells (at protein level).

It localises to the cell membrane. Its function is as follows. Promotes cell surface expression of the potassium channel KCND2. Modulates the activity and gating characteristics of the potassium channel KCND2. Has no dipeptidyl aminopeptidase activity. The sequence is that of Inactive dipeptidyl peptidase 10 (Dpp10) from Rattus norvegicus (Rat).